The following is a 344-amino-acid chain: Uroporphyrinogen decarboxylase (344 aa).

Residues 23–27 (RQAGR), Asp73, Tyr149, Thr204, and His321 contribute to the substrate site.

It belongs to the uroporphyrinogen decarboxylase family. As to quaternary structure, homodimer.

Its subcellular location is the cytoplasm. The enzyme catalyses uroporphyrinogen III + 4 H(+) = coproporphyrinogen III + 4 CO2. The protein operates within porphyrin-containing compound metabolism; protoporphyrin-IX biosynthesis; coproporphyrinogen-III from 5-aminolevulinate: step 4/4. Functionally, catalyzes the decarboxylation of four acetate groups of uroporphyrinogen-III to yield coproporphyrinogen-III. This is Uroporphyrinogen decarboxylase from Francisella tularensis subsp. mediasiatica (strain FSC147).